Consider the following 281-residue polypeptide: Protein ZAR1-like 1.S (281 aa).

The 3CxxC-type zinc-finger motif lies at 183–267 (QKYGFFQCKD…QDLCGRCKGQ (85 aa)).

Belongs to the ZAR1 family. As to quaternary structure, component of a cytoplasmic ribonucleoprotein complex together with eif4enif1/4E-T and cpeb1. In terms of tissue distribution, expressed in oocytes.

It localises to the cytoplasm. It is found in the cytoplasmic ribonucleoprotein granule. Its function is as follows. mRNA-binding protein required for maternal mRNA storage, translation and degradation during oocyte maturation. Controls timing of meiosis during oogenesis. Probably promotes formation of some phase-separated membraneless compartment that stores maternal mRNAs in oocytes: acts by undergoing liquid-liquid phase separation upon binding to maternal mRNAs. Binds to the 3'-UTR of maternal mRNAs, inhibiting their translation. The protein is Protein ZAR1-like 1.S of Xenopus laevis (African clawed frog).